We begin with the raw amino-acid sequence, 196 residues long: GTP cyclohydrolase 1 (196 aa).

Residues C84, H87, and C157 each contribute to the Zn(2+) site.

It belongs to the GTP cyclohydrolase I family. Toroid-shaped homodecamer, composed of two pentamers of five dimers.

The enzyme catalyses GTP + H2O = 7,8-dihydroneopterin 3'-triphosphate + formate + H(+). The protein operates within cofactor biosynthesis; 7,8-dihydroneopterin triphosphate biosynthesis; 7,8-dihydroneopterin triphosphate from GTP: step 1/1. The protein is GTP cyclohydrolase 1 of Corynebacterium glutamicum (strain R).